The chain runs to 63 residues: MSRVCEICGKGSLSGNSVSKSKIHTKRVWKPNLVNVKTEIGGRTLTIKMCSRCLKSDYVTKKV.

Belongs to the bacterial ribosomal protein bL28 family.

The protein is Large ribosomal subunit protein bL28 of Treponema denticola (strain ATCC 35405 / DSM 14222 / CIP 103919 / JCM 8153 / KCTC 15104).